A 206-amino-acid chain; its full sequence is Orotate phosphoribosyltransferase (206 aa).

Residues Arg97, Lys98, Lys101, and 125–133 (NDVIASGRS) each bind 5-phospho-alpha-D-ribose 1-diphosphate. Arg157 is a binding site for orotate.

Belongs to the purine/pyrimidine phosphoribosyltransferase family. PyrE subfamily. As to quaternary structure, homodimer. Mg(2+) is required as a cofactor.

The catalysed reaction is orotidine 5'-phosphate + diphosphate = orotate + 5-phospho-alpha-D-ribose 1-diphosphate. It functions in the pathway pyrimidine metabolism; UMP biosynthesis via de novo pathway; UMP from orotate: step 1/2. Catalyzes the transfer of a ribosyl phosphate group from 5-phosphoribose 1-diphosphate to orotate, leading to the formation of orotidine monophosphate (OMP). This chain is Orotate phosphoribosyltransferase, found in Chlamydia caviae (strain ATCC VR-813 / DSM 19441 / 03DC25 / GPIC) (Chlamydophila caviae).